A 369-amino-acid polypeptide reads, in one-letter code: Putative 2-aminoethylphosphonate import ATP-binding protein PhnT (369 aa).

One can recognise an ABC transporter domain in the interval 19–250; the sequence is IVLDSLRVAY…PPNRFASEFL (232 aa). An ATP-binding site is contributed by 51 to 58; it reads GPSGSGKT.

It belongs to the ABC transporter superfamily. 2-aminoethylphosphonate importer (TC 3.A.1.11.5) family.

The protein resides in the cell inner membrane. In terms of biological role, probably part of the PhnSTUV complex (TC 3.A.1.11.5) involved in 2-aminoethylphosphonate import. Probably responsible for energy coupling to the transport system. In Salmonella choleraesuis (strain SC-B67), this protein is Putative 2-aminoethylphosphonate import ATP-binding protein PhnT (phnT).